A 602-amino-acid polypeptide reads, in one-letter code: Cytokine-like nuclear factor N-PAC (602 aa).

2 positions are modified to phosphoserine: S8 and S10. The PWWP domain maps to 22-81 (PKDLIWAKMKGFTPWPGMIVDPPLDLLSQQRRANTKCVFFFGSRNFAWIEENNIKPFEGP). The disordered stretch occupies residues 162 to 262 (GSPDEGDGLD…ASSTPTGRRR (101 aa)). Polar residues-rich tracts occupy residues 176 to 188 (ADSS…SPAV), 204 to 217 (AATS…SAKS), and 224 to 233 (SAQQSPSGPS). Phosphoserine is present on residues S224, S228, and S243. A dehydrogenase domain region spans residues 309–602 (RDIVPSEQTF…SSAVFVRSRF (294 aa)). Residues 319–333 (GFLG…IVKD), T411, and R554 each bind NAD(+).

Belongs to the HIBADH-related family. NP60 subfamily. As to quaternary structure, binds to mononucleosomes. Interacts with male-specific lethal (MSL) histone acetyltransferase complex at least composed of mof, msl-1, msl-2 and msl-3.

The protein localises to the chromosome. In terms of biological role, nucleosome-destabilizing factor that is recruited to genes during transcriptional activation and colocalizes with a subset of trimethylated 'Lys-36' histone H3 (H3K36me3)-enriched regions. Binds DNA (in vitro). Facilitates Pol II transcription through nucleosomes. Facilitates male-specific lethal (MSL) histone acetyltransferase complex targeting to active genes on the X chromosome. Stimulates the acetylation of 'Lys-56' of nucleosomal histone H3 (H3K56ac) by nej. May have oxidoreductase activity. The chain is Cytokine-like nuclear factor N-PAC from Drosophila melanogaster (Fruit fly).